A 705-amino-acid polypeptide reads, in one-letter code: Polyribonucleotide nucleotidyltransferase (705 aa).

Mg(2+) contacts are provided by aspartate 486 and aspartate 492. The KH domain maps to 553-612; the sequence is PRIHTMKVSQDKIRDIIGKGGATIRQLTEETGTTIEIEDDGTVKIAATSGEQAEDAINRI. One can recognise an S1 motif domain in the interval 622–690; it reads GTLYTGKVVR…RQGRVRLSIK (69 aa).

The protein belongs to the polyribonucleotide nucleotidyltransferase family. Component of the RNA degradosome, which is a multiprotein complex involved in RNA processing and mRNA degradation. Requires Mg(2+) as cofactor.

The protein localises to the cytoplasm. It carries out the reaction RNA(n+1) + phosphate = RNA(n) + a ribonucleoside 5'-diphosphate. Involved in mRNA degradation. Catalyzes the phosphorolysis of single-stranded polyribonucleotides processively in the 3'- to 5'-direction. In Colwellia psychrerythraea (strain 34H / ATCC BAA-681) (Vibrio psychroerythus), this protein is Polyribonucleotide nucleotidyltransferase.